Consider the following 216-residue polypeptide: Pathogenicity-related ORF2 (216 aa).

A run of 4 helical transmembrane segments spans residues 6-26, 55-75, 157-177, and 193-213; these read VGSL…AAMV, LNGV…MEAF, IGFL…NALM, and FKLL…GLVL.

This sequence belongs to the FliP/MopC/SpaP family.

Its subcellular location is the cell membrane. In terms of biological role, important for pathogenicity. This is Pathogenicity-related ORF2 from Xanthomonas campestris pv. glycines.